We begin with the raw amino-acid sequence, 252 residues long: Isoprenyl transferase (252 aa).

Residue Asp-32 is part of the active site. Asp-32 is a Mg(2+) binding site. Residues Gly-33 to Arg-36, Trp-37, Arg-45, His-49, and Ser-77 to Glu-79 contribute to the substrate site. Asn-80 acts as the Proton acceptor in catalysis. Residues Trp-81, Arg-83, Arg-200, and Arg-206–Ser-208 contribute to the substrate site. Glu-219 is a binding site for Mg(2+).

This sequence belongs to the UPP synthase family. As to quaternary structure, homodimer. Mg(2+) is required as a cofactor.

In terms of biological role, catalyzes the condensation of isopentenyl diphosphate (IPP) with allylic pyrophosphates generating different type of terpenoids. This Oceanobacillus iheyensis (strain DSM 14371 / CIP 107618 / JCM 11309 / KCTC 3954 / HTE831) protein is Isoprenyl transferase.